The following is a 540-amino-acid chain: Glucose-6-phosphate isomerase (540 aa).

E350 acts as the Proton donor in catalysis. Active-site residues include H381 and K503.

Belongs to the GPI family.

The protein localises to the cytoplasm. It catalyses the reaction alpha-D-glucose 6-phosphate = beta-D-fructose 6-phosphate. The protein operates within carbohydrate biosynthesis; gluconeogenesis. It functions in the pathway carbohydrate degradation; glycolysis; D-glyceraldehyde 3-phosphate and glycerone phosphate from D-glucose: step 2/4. Functionally, catalyzes the reversible isomerization of glucose-6-phosphate to fructose-6-phosphate. This chain is Glucose-6-phosphate isomerase, found in Burkholderia ambifaria (strain MC40-6).